A 291-amino-acid polypeptide reads, in one-letter code: 6-deoxy-6-sulfogluconolactonase (291 aa).

Residues Glu-17, Asn-148, and Asp-198 each coordinate a divalent metal cation. The active-site Proton donor/acceptor is the Asp-198.

It belongs to the SMP-30/CGR1 family. The cofactor is a divalent metal cation.

The enzyme catalyses 6-deoxy-6-sulfo-D-glucono-1,5-lactone + H2O = 6-deoxy-6-sulfo-D-gluconate + H(+). Functionally, catalyzes the hydrolysis of 6-deoxy-6-sulfo-D-glucono-1,5-lactone to form 6-deoxy-6-sulfo-D-gluconate. Is involved in a degradation pathway of sulfoquinovose (SQ) that allows P.putida SQ1 to use SQ as the sole carbon and energy source for growth. The polypeptide is 6-deoxy-6-sulfogluconolactonase (Pseudomonas putida (Arthrobacter siderocapsulatus)).